The following is a 134-amino-acid chain: Loki profilin-2 (134 aa).

The tract at residues 55-62 (LALGEKGI) is loki loop.

This sequence belongs to the Asgard profilin family.

It is found in the cytoplasm. Its subcellular location is the cytoskeleton. With respect to regulation, inhibition of rabbit actin polymerization is reduced by phosphatidylinositol-(4,5)-P2(1,2-dipalmitoyl), a soluble form of the phospholipid phosphatidylinositol, suggesting an unknown lipid might regulate actin-profilin interaction in vivo. In terms of biological role, binds to actin and affects the structure of the cytoskeleton. At high concentrations inhibits spontaneous rabbit actin nucleation. This strongly suggests this archaea has a profilin-regulated actin system, and actin-type genes can be identified in this organism. This chain is Loki profilin-2, found in Lokiarchaeum sp. (strain GC14_75).